The chain runs to 101 residues: MAKNSMKAREAKRTKLVAQFAEKRTALKAIISDVNTSEDDRWDAVLKLQALPRDSSPVRQRNRCNITGRPHGFLRKFGMSRIKVREAAMRGEIPGLKKASW.

The protein belongs to the universal ribosomal protein uS14 family. Part of the 30S ribosomal subunit. Contacts proteins S3 and S10.

Functionally, binds 16S rRNA, required for the assembly of 30S particles and may also be responsible for determining the conformation of the 16S rRNA at the A site. The sequence is that of Small ribosomal subunit protein uS14 from Pseudoalteromonas translucida (strain TAC 125).